The sequence spans 499 residues: Zinc finger protein PLAG1 (499 aa).

The tract at residues 1 to 33 is disordered; that stretch reads MATVIPGDLSEVRDTQKAPSGKRKRGESKPRKN. Positions 2–84 are interaction with KPNA2; it reads ATVIPGDLSE…SKYKLQRHMA (83 aa). The short motif at 22–25 is the Nuclear localization signal element; it reads KRKR. 7 C2H2-type zinc fingers span residues 34-56, 62-86, 92-114, 121-143, 150-172, 185-207, and 213-236; these read FPCQ…SFSH, YKCT…MATH, HKCN…LHTH, FKCE…LALH, LTCK…LKSH, HQCE…MVVH, and FLCQ…KKSH. Residues 41 to 242 form a decreased nuclear import with localization in the nucleus but also in the cytoplasm region; that stretch reads KAFNSVEKLK…KKSHNQELLK (202 aa). The repression domain; contains 3 sumoylation motifs and massively decrease transcription activity stretch occupies residues 243–383; the sequence is VKTEPVDFLD…SQASSSKLGL (141 aa). Residues 243–499 are activates transcription; Inhibition of nuclear import due to lack of NLS and KPNA2 interaction; that stretch reads VKTEPVDFLD…TLPRFHQAFQ (257 aa). Residues K244 and K263 each participate in a glycyl lysine isopeptide (Lys-Gly) (interchain with G-Cter in SUMO) cross-link. The interval 364–400 is disordered; it reads QGGAPSSSQDSQASSSKLGLEPQSGSPDDGAGDLSLS. The segment covering 369 to 379 has biased composition (low complexity); that stretch reads SSSQDSQASSS. The massively activates transcription stretch occupies residues 384-499; that stretch reads EPQSGSPDDG…TLPRFHQAFQ (116 aa).

Belongs to the krueppel C2H2-type zinc-finger protein family. As to quaternary structure, interacts with KPNA2, which escorts protein to the nucleus via interaction with nuclear localization signal. Interacts with E3 SUMO-protein ligase PIAS1, PIAS2 and PIAS4. Sumoylated with SUMO1; which inhibits transcriptional activity, but does not affect nuclear localization. Blockers of sumoylation pathway such as SENP3 and inactive UBE2I increases transcriptional capacity. Sumoylation is increased in the presence of PIAS1. Post-translationally, acetylated by lysine acetyltransferase EP300; which activates transcriptional capacity. Lysine residues that are sumoylated also seem to be target for acetylation. As to expression, expressed in heart, spleen, lung, kidney, brain, testis and epididymis but not in salivary glands.

Its subcellular location is the nucleus. Transcription factor whose activation results in up-regulation of target genes, such as IGFII, leading to uncontrolled cell proliferation: when overexpressed in cultured cells, higher proliferation rate and transformation are observed. Other target genes such as CRLF1, CRABP2, CRIP2, PIGF are strongly induced in cells with PLAG1 induction. Proto-oncogene whose ectopic expression can trigger the development of pleomorphic adenomas of the salivary gland and lipoblastomas. Cooperates with CBFB-MYH11. The protein is Zinc finger protein PLAG1 (Plag1) of Rattus norvegicus (Rat).